We begin with the raw amino-acid sequence, 519 residues long: Galactokinase (519 aa).

Residues Arg-47, Glu-53, His-54, and Asp-56 each contribute to the alpha-D-galactose site. Positions 159, 161, 163, and 164 each coordinate ATP. Position 209 (Asp-209) interacts with alpha-D-galactose. Asp-209 functions as the Proton acceptor in the catalytic mechanism. Residues Asn-257 and Lys-258 each contribute to the ATP site. Tyr-266 contacts alpha-D-galactose.

Belongs to the GHMP kinase family. GalK subfamily.

The catalysed reaction is alpha-D-galactose + ATP = alpha-D-galactose 1-phosphate + ADP + H(+). The protein operates within carbohydrate metabolism; galactose metabolism. Functionally, galactokinase is a key enzyme in the galactose metabolism where it catalyzes the conversion of alpha-D-galactose to galactose 1-phosphate. Can also induce the transcription of the gal genes in response to the organism being challenged with galactose as the sole source of carbon. The polypeptide is Galactokinase (gal1) (Schizosaccharomyces pombe (strain 972 / ATCC 24843) (Fission yeast)).